A 1207-amino-acid polypeptide reads, in one-letter code: DNA-directed RNA polymerase subunit beta' (1207 aa).

Positions 60, 62, 75, and 78 each coordinate Zn(2+). Positions 449, 451, and 453 each coordinate Mg(2+). The Zn(2+) site is built by Cys-822, Cys-896, Cys-903, and Cys-906.

This sequence belongs to the RNA polymerase beta' chain family. The RNAP catalytic core consists of 2 alpha, 1 beta, 1 beta' and 1 omega subunit. When a sigma factor is associated with the core the holoenzyme is formed, which can initiate transcription. Mg(2+) serves as cofactor. The cofactor is Zn(2+).

The catalysed reaction is RNA(n) + a ribonucleoside 5'-triphosphate = RNA(n+1) + diphosphate. DNA-dependent RNA polymerase catalyzes the transcription of DNA into RNA using the four ribonucleoside triphosphates as substrates. This Staphylococcus saprophyticus subsp. saprophyticus (strain ATCC 15305 / DSM 20229 / NCIMB 8711 / NCTC 7292 / S-41) protein is DNA-directed RNA polymerase subunit beta'.